A 72-amino-acid polypeptide reads, in one-letter code: Translation initiation factor IF-1 (72 aa).

In terms of domain architecture, S1-like spans 1-72; sequence MSKSDYIELE…TKGRITFRHK (72 aa).

It belongs to the IF-1 family. As to quaternary structure, component of the 30S ribosomal translation pre-initiation complex which assembles on the 30S ribosome in the order IF-2 and IF-3, IF-1 and N-formylmethionyl-tRNA(fMet); mRNA recruitment can occur at any time during PIC assembly.

It localises to the cytoplasm. One of the essential components for the initiation of protein synthesis. Stabilizes the binding of IF-2 and IF-3 on the 30S subunit to which N-formylmethionyl-tRNA(fMet) subsequently binds. Helps modulate mRNA selection, yielding the 30S pre-initiation complex (PIC). Upon addition of the 50S ribosomal subunit IF-1, IF-2 and IF-3 are released leaving the mature 70S translation initiation complex. In Vesicomyosocius okutanii subsp. Calyptogena okutanii (strain HA), this protein is Translation initiation factor IF-1.